A 191-amino-acid polypeptide reads, in one-letter code: MVKKLVMAQKRGETRALCLGVTMVVCAVITYYILVTTVLPLYQKSVWTQESKCHLIETNIRDQEELKGKKVPQYPCLWVNVSAAGRWAVLYHTEDTRDQNQQCSYIPGSVDNYQTARADVEKVRAKFQEQQVFYCFSAPRGNETSVLFQRLYGPQALLFSLFWPTFLLTGGLLIIAMVKSNQYLSILAAQK.

Topologically, residues 1-18 (MVKKLVMAQKRGETRALC) are cytoplasmic. Residues 19-39 (LGVTMVVCAVITYYILVTTVL) traverse the membrane as a helical segment. Residues 40-157 (PLYQKSVWTQ…FQRLYGPQAL (118 aa)) lie on the Extracellular side of the membrane. N-linked (GlcNAc...) asparagine glycosylation is found at Asn-80 and Asn-142. The helical transmembrane segment at 158 to 178 (LFSLFWPTFLLTGGLLIIAMV) threads the bilayer. Residues 179–191 (KSNQYLSILAAQK) are Cytoplasmic-facing.

It belongs to the KCNMB (TC 8.A.14.1) family. KCNMB1 subfamily. In terms of assembly, interacts with KCNMA1 tetramer. There are probably 4 molecules of KCMNB1 per KCNMA1 tetramer. Post-translationally, N-glycosylated. As to expression, abundantly expressed in smooth muscle. Low levels of expression in most other tissues. Within the brain, relatively high levels found in hippocampus and corpus callosum.

It is found in the membrane. Regulatory subunit of the calcium activated potassium KCNMA1 (maxiK) channel. Modulates the calcium sensitivity and gating kinetics of KCNMA1, thereby contributing to KCNMA1 channel diversity. Increases the apparent Ca(2+)/voltage sensitivity of the KCNMA1 channel. It also modifies KCNMA1 channel kinetics and alters its pharmacological properties. It slows down the activation and the deactivation kinetics of the channel. Acts as a negative regulator of smooth muscle contraction by enhancing the calcium sensitivity to KCNMA1. Its presence is also a requirement for internal binding of the KCNMA1 channel opener dehydrosoyasaponin I (DHS-1) triterpene glycoside and for external binding of the agonist hormone 17-beta-estradiol (E2). Increases the binding activity of charybdotoxin (CTX) toxin to KCNMA1 peptide blocker by increasing the CTX association rate and decreasing the dissociation rate. This is Calcium-activated potassium channel subunit beta-1 (KCNMB1) from Homo sapiens (Human).